Consider the following 122-residue polypeptide: Probable transcription factor PqrA (122 aa).

Residues 7 to 107 form the HTH araC/xylS-type domain; sequence NDILKWLETQ…NTTPAKFREN (101 aa). 2 consecutive DNA-binding regions (H-T-H motif) follow at residues 26 to 47 and 74 to 97; these read DTIA…KDFK and ILDI…KKHF.

In terms of biological role, upon expression in E.coli strain KY2563 confers resistance to antibiotics ofloxacin, ciprofloxacin, tetracycline, chloramphenicol, and ceftazidime (increases minimal inhibitory concentration by 8-32 times); also decreases expression of OmpF. This chain is Probable transcription factor PqrA, found in Proteus vulgaris.